Reading from the N-terminus, the 91-residue chain is Small ribosomal subunit protein uS19 (91 aa).

The protein belongs to the universal ribosomal protein uS19 family.

Functionally, protein S19 forms a complex with S13 that binds strongly to the 16S ribosomal RNA. This Bordetella avium (strain 197N) protein is Small ribosomal subunit protein uS19.